A 171-amino-acid polypeptide reads, in one-letter code: MLGSLIVNFKLFSAGGAIMEVFSRSFKNGEEIPKVYTCDGKDISPHIGWEDVPEGTKSFVLIMDDPDAPIGTFTHWVVYDIPSQTRELLEDFPKVPEVSGIKQGINDFGRVGYGGPCPPRGHGYHRYFFKVFALSVESLGLPPGASRKDVELKMNGKILAQAHIIGLYKRD.

It belongs to the UPF0098 family.

The chain is UPF0098 protein aq_1250 from Aquifex aeolicus (strain VF5).